A 92-amino-acid chain; its full sequence is Small ribosomal subunit protein uS19 (92 aa).

The protein belongs to the universal ribosomal protein uS19 family.

In terms of biological role, protein S19 forms a complex with S13 that binds strongly to the 16S ribosomal RNA. This chain is Small ribosomal subunit protein uS19, found in Rhodopseudomonas palustris (strain BisB5).